The primary structure comprises 424 residues: Serine hydroxymethyltransferase (424 aa).

(6S)-5,6,7,8-tetrahydrofolate contacts are provided by residues leucine 123 and 127–129; that span reads GHL. The residue at position 232 (lysine 232) is an N6-(pyridoxal phosphate)lysine. Glutamate 245 provides a ligand contact to (6S)-5,6,7,8-tetrahydrofolate.

The protein belongs to the SHMT family. As to quaternary structure, homodimer. Pyridoxal 5'-phosphate serves as cofactor.

The protein resides in the cytoplasm. The enzyme catalyses (6R)-5,10-methylene-5,6,7,8-tetrahydrofolate + glycine + H2O = (6S)-5,6,7,8-tetrahydrofolate + L-serine. It functions in the pathway one-carbon metabolism; tetrahydrofolate interconversion. Its pathway is amino-acid biosynthesis; glycine biosynthesis; glycine from L-serine: step 1/1. Catalyzes the reversible interconversion of serine and glycine with tetrahydrofolate (THF) serving as the one-carbon carrier. This reaction serves as the major source of one-carbon groups required for the biosynthesis of purines, thymidylate, methionine, and other important biomolecules. Also exhibits THF-independent aldolase activity toward beta-hydroxyamino acids, producing glycine and aldehydes, via a retro-aldol mechanism. This Kocuria rhizophila (strain ATCC 9341 / DSM 348 / NBRC 103217 / DC2201) protein is Serine hydroxymethyltransferase.